We begin with the raw amino-acid sequence, 786 residues long: UPF0313 protein SO_0311 (786 aa).

A Radical SAM core domain is found at 371–649; sequence AYDMIKTSIN…KALLRYHDPA (279 aa). The [4Fe-4S] cluster site is built by Cys-385, Cys-389, and Cys-392. Disordered regions lie at residues 669-688 and 698-786; these read NSPN…PKWM and LTRF…QQAK. 2 stretches are compositionally biased toward basic and acidic residues: residues 679-688 and 706-717; these read GRNERGPKWM and FDERKGKGDAKG. Over residues 718-731 the composition is skewed to low complexity; the sequence is KPSASKPKGPKSGA. Residues 732-741 are compositionally biased toward polar residues; sequence NAPQSQQPKT.

This sequence belongs to the UPF0313 family. The cofactor is [4Fe-4S] cluster.

This Shewanella oneidensis (strain ATCC 700550 / JCM 31522 / CIP 106686 / LMG 19005 / NCIMB 14063 / MR-1) protein is UPF0313 protein SO_0311.